Reading from the N-terminus, the 176-residue chain is Large ribosomal subunit protein uL10 (176 aa).

The protein belongs to the universal ribosomal protein uL10 family. Part of the ribosomal stalk of the 50S ribosomal subunit. The N-terminus interacts with L11 and the large rRNA to form the base of the stalk. The C-terminus forms an elongated spine to which L12 dimers bind in a sequential fashion forming a multimeric L10(L12)X complex.

Forms part of the ribosomal stalk, playing a central role in the interaction of the ribosome with GTP-bound translation factors. This Sorangium cellulosum (strain So ce56) (Polyangium cellulosum (strain So ce56)) protein is Large ribosomal subunit protein uL10.